The following is a 71-amino-acid chain: Conotoxin LvVIB (71 aa).

An N-terminal signal peptide occupies residues 1-17; the sequence is VLIIAVLFLTASELVTA. The propeptide occupies 18–41; that stretch reads DYTRDKWQYRAASLRDAMRNFRDT. Disulfide bonds link Cys43-Cys57, Cys50-Cys62, and Cys56-Cys69.

Belongs to the conotoxin O1 superfamily. In terms of tissue distribution, expressed by the venom duct.

It is found in the secreted. The chain is Conotoxin LvVIB from Conus lividus (Livid cone).